The sequence spans 877 residues: MTKFTTEEVRSKFITYFKANNHTHVPASSLIPDNDPSLMFVNSGMVQFKNVFTGQEKRSYNKAVTSQKSLRAGGKHNDLEHVGYTARHHTFFEMLGNFSFGDYFKEQAIYYTWDLLTKEFELPKDKLYVTIYHTDDPAASYWKKIAGLKDDRIIRIKTNDNFWSMGDTGPCGPCSEIFFDHGEEIYGGLPGTKDENCDRFIEIWNMVFMQYEQINKETRIELPKKSIDTGMGLERMTAVLQHVNNNYDIDLFQEIINFTENIVKIKVDGEAKFSYRVIADHLRASSFLIADGIIPSNEGRGYVLRRIMRRAMRHAHMLGAKEPLMYKLLPKLVDLMGNIYPELKIAESFISSILEQEEIRFKTTLERGLKLLTEETKTLTKGSKLSGEVAFKLYDTYGFPLDLTEDILKNRDITVDHKGFEELMLTQKERARKSWLGSGESKTDQLWFDIKEQYGSTEFLGYTLNEAECKIIALIKNNNLVDNIQEINTQFLLIANQTPFYGESGGQMGDIGMIFSQGSEIEVIDTFKYLRSIIVHKCILKKGKINIGENANLNINIRYRQNLRIHHSATHILHAVLHKILGKQVIQKGSLVTSTYLRFDINHSKAITNQEITLIEDQVNEIIRNNHEVTTTVMFTEDAIKQGAIALFGEKYDSEVRVVKIGETSLELCCGTHVKRTGDIGSFKIISESAIAAGVRRIEAVCGEFVIKLIRERDSLLKSIESSFKTNKNELITKVINILERNKELEKELEKAHLASLDLSIEQIKKQTKEITGIKLLYKEVGNINNKILRQAAENLTKKVENLIVVYIAHGVDKLSITVAVSKAITDKFNAGIIAKELSLFLGGSGGGGQASIAQAGGNDIINLTNINKKLWSLIVT.

Zn(2+)-binding residues include H567, H571, C669, and H673.

The protein belongs to the class-II aminoacyl-tRNA synthetase family. Requires Zn(2+) as cofactor.

Its subcellular location is the cytoplasm. The catalysed reaction is tRNA(Ala) + L-alanine + ATP = L-alanyl-tRNA(Ala) + AMP + diphosphate. Its function is as follows. Catalyzes the attachment of alanine to tRNA(Ala) in a two-step reaction: alanine is first activated by ATP to form Ala-AMP and then transferred to the acceptor end of tRNA(Ala). Also edits incorrectly charged Ser-tRNA(Ala) and Gly-tRNA(Ala) via its editing domain. This is Alanine--tRNA ligase from Rickettsia prowazekii (strain Madrid E).